A 411-amino-acid chain; its full sequence is Signal-transducing adaptor protein 2 (411 aa).

Residues His20–Arg120 enclose the PH domain. Tyr22 is modified (phosphotyrosine). One can recognise an SH2 domain in the interval Trp152–Glu248. Tyr250 is modified (phosphotyrosine; by PTK6). Residues Val291–Thr320 form a disordered region. Phosphotyrosine occurs at positions 318 and 330. Residues Ser338–Lys364 form a disordered region. Positions Thr390 to Glu410 form a coiled coil.

Interacts with PTK6 and CSF1R. In terms of processing, phosphorylated on tyrosine. Phosphorylated by PTK6 at Tyr-250 modulates PTK6-mediated STAT3 activation. Widely expressed.

It is found in the cytoplasm. It localises to the membrane. In terms of biological role, substrate of protein kinase PTK6. May play a regulatory role in the acute-phase response in systemic inflammation and may modulate STAT3 activity. In Mus musculus (Mouse), this protein is Signal-transducing adaptor protein 2 (Stap2).